A 240-amino-acid polypeptide reads, in one-letter code: Pyridoxine 5'-phosphate synthase (240 aa).

A 3-amino-2-oxopropyl phosphate-binding site is contributed by Asn-7. 9–10 (DH) is a 1-deoxy-D-xylulose 5-phosphate binding site. Arg-18 provides a ligand contact to 3-amino-2-oxopropyl phosphate. The active-site Proton acceptor is the His-43. Arg-45 and His-50 together coordinate 1-deoxy-D-xylulose 5-phosphate. The active-site Proton acceptor is Glu-70. Residue Thr-100 participates in 1-deoxy-D-xylulose 5-phosphate binding. The Proton donor role is filled by His-191. 3-amino-2-oxopropyl phosphate-binding positions include Gly-192 and 213 to 214 (GH).

This sequence belongs to the PNP synthase family. As to quaternary structure, homooctamer; tetramer of dimers.

It is found in the cytoplasm. It catalyses the reaction 3-amino-2-oxopropyl phosphate + 1-deoxy-D-xylulose 5-phosphate = pyridoxine 5'-phosphate + phosphate + 2 H2O + H(+). The protein operates within cofactor biosynthesis; pyridoxine 5'-phosphate biosynthesis; pyridoxine 5'-phosphate from D-erythrose 4-phosphate: step 5/5. Functionally, catalyzes the complicated ring closure reaction between the two acyclic compounds 1-deoxy-D-xylulose-5-phosphate (DXP) and 3-amino-2-oxopropyl phosphate (1-amino-acetone-3-phosphate or AAP) to form pyridoxine 5'-phosphate (PNP) and inorganic phosphate. The polypeptide is Pyridoxine 5'-phosphate synthase (Trichodesmium erythraeum (strain IMS101)).